The primary structure comprises 766 residues: U3 small nucleolar RNA-associated protein 14 homolog C (766 aa).

The tract at residues 14 to 42 (HQEELVDLPKNYPLSENEDEGDSDGERKH) is disordered. Ser-28, Ser-51, Ser-76, and Ser-80 each carry phosphoserine. A Glycyl lysine isopeptide (Lys-Gly) (interchain with G-Cter in SUMO2) cross-link involves residue Lys-121. Phosphothreonine is present on Thr-204. 2 coiled-coil regions span residues 216 to 245 (LEEAKMHRAELQRARALQSYYEAKARKEKK) and 316 to 346 (LEARQAMQEQLAKNKELTQKLQVASESEEEE). The disordered stretch occupies residues 365–563 (MNVDGPNPWM…EQLINLQNFL (199 aa)). Positions 396 to 405 (ELAAHEVSAS) are enriched in low complexity. Residues Ser-403 and Ser-405 each carry the phosphoserine modification. Basic and acidic residues predominate over residues 407–434 (AEERPVAEEEILLREFEERQSLRKRSEL). Ser-443 carries the post-translational modification Phosphoserine. Lys-447 participates in a covalent cross-link: Glycyl lysine isopeptide (Lys-Gly) (interchain with G-Cter in SUMO2). Residue Ser-451 is modified to Phosphoserine. Residues 452-470 (QEVLSELRALSQKLKEKHQ) adopt a coiled-coil conformation. A compositionally biased stretch (basic residues) spans 466 to 475 (KEKHQSRKQK). Over residues 502–527 (RSERVQTLEELEELGKEDCFQNKELP) the composition is skewed to basic and acidic residues. A Glycyl lysine isopeptide (Lys-Gly) (interchain with G-Cter in SUMO2) cross-link involves residue Lys-517. The segment covering 533–542 (GQQSERTPNN) has biased composition (polar residues). The segment covering 545–555 (DAPKEKKEKEQ) has biased composition (basic and acidic residues). Ser-567 carries the post-translational modification Phosphoserine. Residue Lys-732 forms a Glycyl lysine isopeptide (Lys-Gly) (interchain with G-Cter in SUMO2) linkage. The segment at 734 to 766 (EDVGYQSSSRSDLPVIQRNPKRITTRHNKEEKL) is disordered.

The protein belongs to the UTP14 family. In terms of tissue distribution, expressed in testis.

It is found in the nucleus. The protein localises to the nucleolus. In terms of biological role, essential for spermatogenesis. May be required specifically for ribosome biogenesis and hence protein synthesis during male meiosis. This is U3 small nucleolar RNA-associated protein 14 homolog C (UTP14C) from Homo sapiens (Human).